Reading from the N-terminus, the 180-residue chain is Signal peptidase complex subunit 3 (180 aa).

The Cytoplasmic segment spans residues 1–11 (MNTVLSRANSL). The chain crosses the membrane as a helical; Signal-anchor for type II membrane protein span at residues 12–32 (FAFSLSVMAALTFGCFITTAF). Residues 33-180 (KERSVPVSIA…PDTYETTKSY (148 aa)) lie on the Lumenal side of the membrane. Residue asparagine 141 is glycosylated (N-linked (GlcNAc...) asparagine).

The protein belongs to the SPCS3 family. Component of the signal peptidase complex paralog A (SPC-A) composed of a catalytic subunit SEC11A and three accessory subunits SPCS1, SPCS2 and SPCS3. Component of the signal peptidase complex paralog C (SPC-C) composed of a catalytic subunit SEC11C and three accessory subunits SPCS1, SPCS2 and SPCS3. The complex induces a local thinning of the ER membrane which is used to measure the length of the signal peptide (SP) h-region of protein substrates. This ensures the selectivity of the complex towards h-regions shorter than 18-20 amino acids. In terms of tissue distribution, expressed in hen oviduct (at protein level).

Its subcellular location is the endoplasmic reticulum membrane. Essential component of the signal peptidase complex (SPC) which catalyzes the cleavage of N-terminal signal sequences from nascent proteins as they are translocated into the lumen of the endoplasmic reticulum. Essential for the SPC catalytic activity, possibly by stabilizing and positioning the active center of the complex close to the lumenal surface. This chain is Signal peptidase complex subunit 3, found in Gallus gallus (Chicken).